Reading from the N-terminus, the 215-residue chain is Fibroblast growth factor 10 (215 aa).

A signal peptide spans 1–36 (MWKWILTHCASAFPHLPGCCCCFLLLFLVSSVPVTC). The interval 49-73 (TNSSSSSSSSSSSSSFSSPSSAGRH) is disordered. N-linked (GlcNAc...) asparagine glycosylation occurs at Asn-50. Residues 51-69 (SSSSSSSSSSSSSFSSPSS) are compositionally biased toward low complexity. Asn-203 carries N-linked (GlcNAc...) asparagine glycosylation.

Belongs to the heparin-binding growth factors family. In terms of assembly, interacts with FGFR1 and FGFR2. Interacts with FGFBP1. In terms of tissue distribution, preferentially expressed in the lung in adults.

It localises to the secreted. Plays an important role in the regulation of embryonic development, cell proliferation and cell differentiation. Required for normal branching morphogenesis. May play a role in wound healing. The chain is Fibroblast growth factor 10 (Fgf10) from Rattus norvegicus (Rat).